A 341-amino-acid chain; its full sequence is S-adenosylmethionine:tRNA ribosyltransferase-isomerase (341 aa).

This sequence belongs to the QueA family. Monomer.

It is found in the cytoplasm. The enzyme catalyses 7-aminomethyl-7-carbaguanosine(34) in tRNA + S-adenosyl-L-methionine = epoxyqueuosine(34) in tRNA + adenine + L-methionine + 2 H(+). It functions in the pathway tRNA modification; tRNA-queuosine biosynthesis. Functionally, transfers and isomerizes the ribose moiety from AdoMet to the 7-aminomethyl group of 7-deazaguanine (preQ1-tRNA) to give epoxyqueuosine (oQ-tRNA). This Clostridioides difficile (strain 630) (Peptoclostridium difficile) protein is S-adenosylmethionine:tRNA ribosyltransferase-isomerase.